The sequence spans 114 residues: Iron-sulfur cluster insertion protein ErpA (114 aa).

Positions 42, 106, and 108 each coordinate iron-sulfur cluster.

It belongs to the HesB/IscA family. As to quaternary structure, homodimer. The cofactor is iron-sulfur cluster.

Required for insertion of 4Fe-4S clusters for at least IspG. The protein is Iron-sulfur cluster insertion protein ErpA of Haemophilus influenzae (strain PittEE).